Reading from the N-terminus, the 835-residue chain is Protein translocase subunit SecA (835 aa).

Residues Gln85, 103–107 (GEGKT), and Asp492 contribute to the ATP site. The Zn(2+) site is built by Cys819, Cys821, Cys830, and Cys831.

This sequence belongs to the SecA family. As to quaternary structure, monomer and homodimer. Part of the essential Sec protein translocation apparatus which comprises SecA, SecYEG and auxiliary proteins SecDF. Other proteins may also be involved. The cofactor is Zn(2+).

The protein resides in the cell membrane. It localises to the cytoplasm. The enzyme catalyses ATP + H2O + cellular proteinSide 1 = ADP + phosphate + cellular proteinSide 2.. Its function is as follows. Part of the Sec protein translocase complex. Interacts with the SecYEG preprotein conducting channel. Has a central role in coupling the hydrolysis of ATP to the transfer of proteins into and across the cell membrane, serving as an ATP-driven molecular motor driving the stepwise translocation of polypeptide chains across the membrane. The protein is Protein translocase subunit SecA of Clostridium botulinum (strain ATCC 19397 / Type A).